We begin with the raw amino-acid sequence, 46 residues long: uncharacterized protein (46 aa).

A disordered region spans residues 1 to 46 (MEVTPLETGRARSHQKASTAAQPHAADEKMTGSTARRYLSQDHQSV).

This is an uncharacterized protein from Treponema pallidum (strain Nichols).